Reading from the N-terminus, the 271-residue chain is Serine protease SP24D (271 aa).

An N-terminal signal peptide occupies residues 1–22 (MTLADRVPLALAALAYLALVSG). The propeptide at 23 to 49 (VRFHLSEQNDVLPGGSQARRPFFQGAR) is activation peptide. The Peptidase S1 domain occupies 50-269 (IVGGSVASEG…FVTWIQTTMR (220 aa)). A disulfide bridge links cysteine 75 with cysteine 91. Active-site charge relay system residues include histidine 90 and aspartate 136. Disulfide bonds link cysteine 199-cysteine 211 and cysteine 221-cysteine 246. Serine 225 (charge relay system) is an active-site residue.

Belongs to the peptidase S1 family. Highest level of adult expression is in the thorax.

This Anopheles gambiae (African malaria mosquito) protein is Serine protease SP24D (Sp24D).